The chain runs to 382 residues: Mannitol-1-phosphate 5-dehydrogenase (382 aa).

3 to 14 (ALHFGAGNIGRG) is an NAD(+) binding site.

Belongs to the mannitol dehydrogenase family.

It catalyses the reaction D-mannitol 1-phosphate + NAD(+) = beta-D-fructose 6-phosphate + NADH + H(+). The polypeptide is Mannitol-1-phosphate 5-dehydrogenase (Salmonella schwarzengrund (strain CVM19633)).